The chain runs to 108 residues: uncharacterized protein (108 aa).

This is an uncharacterized protein from Acanthamoeba polyphaga (Amoeba).